The sequence spans 326 residues: Ornithine carbamoyltransferase (326 aa).

Residues 57–60 (STRT), Q84, R108, and 135–138 (HPTQ) contribute to the carbamoyl phosphate site. L-ornithine contacts are provided by residues N169, D233, and 237 to 238 (SM). Residue 275-276 (CL) coordinates carbamoyl phosphate.

The protein belongs to the aspartate/ornithine carbamoyltransferase superfamily. OTCase family.

Its subcellular location is the cytoplasm. It catalyses the reaction carbamoyl phosphate + L-ornithine = L-citrulline + phosphate + H(+). Its pathway is amino-acid biosynthesis; L-arginine biosynthesis; L-arginine from L-ornithine and carbamoyl phosphate: step 1/3. In terms of biological role, reversibly catalyzes the transfer of the carbamoyl group from carbamoyl phosphate (CP) to the N(epsilon) atom of ornithine (ORN) to produce L-citrulline. The sequence is that of Ornithine carbamoyltransferase from Escherichia coli O6:K15:H31 (strain 536 / UPEC).